We begin with the raw amino-acid sequence, 762 residues long: cGMP-dependent protein kinase 2 (762 aa).

The tract at residues 1-26 (MGNGSVKPKHAKHPDGHSGNLSNEAL) is disordered. Gly-2 carries N-myristoyl glycine lipidation. 2 positions are modified to phosphoserine: Ser-110 and Ser-117. Positions 118–138 (RRGAKAGVSAEPTTRTYDLNK) are disordered. The tract at residues 168–283 (FLKRLDPQQI…DEEYRNFLRS (116 aa)) is cGMP-binding, high affinity; cAMP-binding, moderate affinity. 3',5'-cyclic GMP is bound by residues 232–235 (GELA), 242–243 (RT), Lys-347, 356–359 (GEKA), 366–367 (RS), Asp-412, and Arg-415. The segment at 286–416 (LLKNLPEDKL…TLNRDDEKRH (131 aa)) is cGMP-binding, high affinity; cAMP-binding, low affinity. Ser-431 is modified (phosphoserine). The Protein kinase domain maps to 453-711 (LEIIATLGVG…INDIKKHRWL (259 aa)). Residues 459-467 (LGVGGFGRV) and Lys-482 contribute to the ATP site. The active-site Proton acceptor is the Asp-576. Thr-609 carries the phosphothreonine modification. The 51-residue stretch at 712 to 762 (NGFNWEGLKARSLPSPLRRELSGPIDHSYFDKYPPEKGVPPDEMSGWDKDF) folds into the AGC-kinase C-terminal domain. Positions 740–762 (YFDKYPPEKGVPPDEMSGWDKDF) are disordered.

This sequence belongs to the protein kinase superfamily. AGC Ser/Thr protein kinase family. cGMP subfamily. Interacts with GRIA1/GLUR1. In terms of processing, myristoylation mediates membrane localization.

It localises to the apical cell membrane. Its subcellular location is the cell membrane. The catalysed reaction is L-seryl-[protein] + ATP = O-phospho-L-seryl-[protein] + ADP + H(+). It catalyses the reaction L-threonyl-[protein] + ATP = O-phospho-L-threonyl-[protein] + ADP + H(+). With respect to regulation, binding of cGMP results in enzyme activation. Its function is as follows. Crucial regulator of intestinal secretion and bone growth. Phosphorylates and activates CFTR on the plasma membrane. Plays a key role in intestinal secretion by regulating cGMP-dependent translocation of CFTR in jejunum. Acts downstream of NMDAR to activate the plasma membrane accumulation of GRIA1/GLUR1 in synapse and increase synaptic plasticity. Phosphorylates GRIA1/GLUR1 at Ser-863. Acts as a regulator of gene expression and activator of the extracellular signal-regulated kinases MAPK3/ERK1 and MAPK1/ERK2 in mechanically stimulated osteoblasts. Under fluid shear stress, mediates ERK activation and subsequent induction of FOS, FOSL1/FRA1, FOSL2/FRA2 and FOSB that play a key role in the osteoblast anabolic response to mechanical stimulation. This Mus musculus (Mouse) protein is cGMP-dependent protein kinase 2 (Prkg2).